The sequence spans 491 residues: Serine/threonine-protein kinase 33 (491 aa).

The segment at 51 to 89 is disordered; that stretch reads FASQERKKERNTSRESSLKDLSIRTSNVERKPQAQWSRS. Residues 54-82 are compositionally biased toward basic and acidic residues; sequence QERKKERNTSRESSLKDLSIRTSNVERKP. Residues 111–377 form the Protein kinase domain; it reads YTFGRILGQG…AKELLDNQWL (267 aa). Residues 117–125 and Lys-140 contribute to the ATP site; that span reads LGQGSFGMV. The Proton acceptor role is filled by Asp-233. A disordered region spans residues 398 to 491; sequence KNNPESDEET…TTLFRGKKRL (94 aa). A compositionally biased stretch (acidic residues) spans 402–414; sequence ESDEETNTDEETE. Ser-403 carries the phosphoserine modification. The span at 415–431 shows a compositional bias: polar residues; sequence QSAVYSPSANTAKQPTN. Low complexity predominate over residues 445-457; the sequence is SSNSSSSKLLSAE. Residues 475–484 show a composition bias toward polar residues; it reads AKTTLKSTTL.

Belongs to the protein kinase superfamily. CAMK Ser/Thr protein kinase family. CaMK subfamily. In terms of assembly, homodimer. In terms of processing, autophosphorylated. As to expression, highly expressed in testis, particularly in cells from the spermatogenic epithelia. Present in meiotic and post meiotic sperm cells. Significant expression is detected in lung epithelia, alveolar macrophages, horizontal cells in the retina and in embryonic organs such as heart, brain and spinal cord. Also expressed in pituitary gland, kidney, pancreas, trachea and thyroid gland.

It localises to the cytoplasm. The protein localises to the cytoskeleton. Its subcellular location is the perinuclear region. It carries out the reaction L-seryl-[protein] + ATP = O-phospho-L-seryl-[protein] + ADP + H(+). It catalyses the reaction L-threonyl-[protein] + ATP = O-phospho-L-threonyl-[protein] + ADP + H(+). With respect to regulation, specifically inhibited by CDD-2807 ((3-([1,1'-Biphenyl]-2-ylethynyl)-1H-indazol-5-yl)(2,6-diazaspiro[3.5]nonan-2-yl)methanone). CDD-2807 is a potential male contraceptive drug: it is not toxic, efficiently crosses the blood-testis barrier and induces a reversible contraceptive effect in male mice. Functionally, serine/threonine protein kinase required for spermatid differentiation and male fertility. Promotes sperm flagella assembly during spermatogenesis by mediating phosphorylation of fibrous sheath proteins AKAP3 and AKAP4. Also phosphorylates vimentin/VIM, thereby regulating the dynamic behavior of the intermediate filament cytoskeleton. The polypeptide is Serine/threonine-protein kinase 33 (Mus musculus (Mouse)).